Here is a 152-residue protein sequence, read N- to C-terminus: Ribosome maturation factor RimP (152 aa).

Belongs to the RimP family.

It is found in the cytoplasm. Required for maturation of 30S ribosomal subunits. The protein is Ribosome maturation factor RimP of Aeromonas salmonicida (strain A449).